A 206-amino-acid polypeptide reads, in one-letter code: MMNSKKQDAFQRLIGALKVLPNVGPKSAQRMAYHLLQQKRKEAEELVDALQTALRQVRHCARCNTFCEGGLCDICADETRDGRRLMVVHMPADVSNIEAANCHDGLYFVLMGQINTALGMDVSAIALDRLAQRLDGGEIEEIIIATAFTAEGNATAYVLSEFFKNLPYKVSRLSQGIPLGGELEYVDAGTLAQAVYERRLIKEGGA.

The C4-type zinc-finger motif lies at 60–75 (CARCNTFCEGGLCDIC). In terms of domain architecture, Toprim spans 83–178 (RRLMVVHMPA…KVSRLSQGIP (96 aa)).

Belongs to the RecR family.

Functionally, may play a role in DNA repair. It seems to be involved in an RecBC-independent recombinational process of DNA repair. It may act with RecF and RecO. The polypeptide is Recombination protein RecR (Neisseria gonorrhoeae (strain NCCP11945)).